We begin with the raw amino-acid sequence, 550 residues long: T-complex protein 1 subunit eta (550 aa).

The tract at residues 529–550 (SESANAGMMPPQGAGRGRGMPM) is disordered.

Belongs to the TCP-1 chaperonin family. As to quaternary structure, heterooligomeric complex of about 850 to 900 kDa that forms two stacked rings, 12 to 16 nm in diameter.

It is found in the cytoplasm. Its function is as follows. Molecular chaperone; assists the folding of proteins upon ATP hydrolysis. Known to play a role, in vitro, in the folding of actin and tubulin. In yeast may play a role in mitotic spindle formation. This Saccharomyces cerevisiae (strain ATCC 204508 / S288c) (Baker's yeast) protein is T-complex protein 1 subunit eta (CCT7).